A 387-amino-acid chain; its full sequence is Patatin group A-2 (387 aa).

The first 23 residues, 1–23 (MATTKSFLILIVMILATTSSTFA), serve as a signal peptide directing secretion. The region spanning 32–230 (LSIDGGGIKG…TVADPALLSV (199 aa)) is the PNPLA domain. Positions 36-41 (GGGIKG) match the GXGXXG motif. The short motif at 75-79 (GTSTG) is the GXSXG element. Serine 77 functions as the Nucleophile in the catalytic mechanism. The N-linked (GlcNAc...) asparagine glycan is linked to asparagine 115. Aspartate 216 (proton acceptor) is an active-site residue. The DGA/G motif lies at 216–218 (DGA). Residues 361–385 (ETYEEALKRFAKLLSDRKKLRANKA) are a coiled coil.

This sequence belongs to the patatin family. In terms of tissue distribution, tuber and stolon.

It localises to the vacuole. In terms of biological role, probable lipolytic acyl hydrolase (LAH), an activity which is thought to be involved in the response of tubers to pathogens. This is Patatin group A-2 from Solanum tuberosum (Potato).